The chain runs to 299 residues: F-actin-capping protein subunit alpha-3 (299 aa).

Phosphoserine is present on Ser-290.

The protein belongs to the F-actin-capping protein alpha subunit family. As to quaternary structure, component of the F-actin capping complex, composed of a heterodimer of an alpha and a beta subunit. Component of the WASH complex, composed of F-actin-capping protein subunit alpha (CAPZA1, CAPZA2 or CAPZA3), F-actin-capping protein subunit beta (CAPZB), WASH (WASHC1, WASH2P, WASH3P, WASH4P, WASH5P or WASH6P), WASHC2 (WASHC2A or WASHC2C), WASHC3, WASHC4 and WASHC5. As to expression, expressed exclusively in testis and sperm. Highest expression is found in the neck region of ejaculated sperm with lower levels found in the tail and postacrosome region.

The protein resides in the cytoplasm. Its subcellular location is the cytoskeleton. F-actin-capping proteins bind in a Ca(2+)-independent manner to the fast growing ends of actin filaments (barbed end) thereby blocking the exchange of subunits at these ends. Unlike other capping proteins (such as gelsolin and severin), these proteins do not sever actin filaments. May play a role in the morphogenesis of spermatid. The protein is F-actin-capping protein subunit alpha-3 (CAPZA3) of Homo sapiens (Human).